The following is a 180-amino-acid chain: MAVTPWQTAFLQLLPSGLAWNKSPDSKLSALAQAISDVIATAADDARQMLRERFPSTSRWYLGEWESFLGLPDCTSENGTLSERQRAAANKMRMTGNLSRRFYEWLAAQYGFTVRLTDSTEGQWVTQVNIYGIKNYRNATVLDNVLTPLRVYESGALECLLEKYKPAHQIYKFVYHDGDN.

In terms of assembly, part of a complex composed of three DNA circularization protein N, three baseplate hub protein gp44 and three sub-complex wedge (made of two copies of each baseplate protein gp46, gp47 and gp48) that forms the baseplate.

The protein localises to the virion. It localises to the host cytoplasm. Its function is as follows. Component of the baseplate. The sequence is that of Baseplate protein gp48 from Enterobacteriaceae (Bacteriophage Mu).